Here is a 155-residue protein sequence, read N- to C-terminus: 6,7-dimethyl-8-ribityllumazine synthase (155 aa).

Residues phenylalanine 22, 56-58 (AFE), and 80-82 (AVI) contribute to the 5-amino-6-(D-ribitylamino)uracil site. 85-86 (ST) contributes to the (2S)-2-hydroxy-3-oxobutyl phosphate binding site. Histidine 88 serves as the catalytic Proton donor. Phenylalanine 113 lines the 5-amino-6-(D-ribitylamino)uracil pocket. Arginine 127 serves as a coordination point for (2S)-2-hydroxy-3-oxobutyl phosphate.

It belongs to the DMRL synthase family.

The enzyme catalyses (2S)-2-hydroxy-3-oxobutyl phosphate + 5-amino-6-(D-ribitylamino)uracil = 6,7-dimethyl-8-(1-D-ribityl)lumazine + phosphate + 2 H2O + H(+). It participates in cofactor biosynthesis; riboflavin biosynthesis; riboflavin from 2-hydroxy-3-oxobutyl phosphate and 5-amino-6-(D-ribitylamino)uracil: step 1/2. Its function is as follows. Catalyzes the formation of 6,7-dimethyl-8-ribityllumazine by condensation of 5-amino-6-(D-ribitylamino)uracil with 3,4-dihydroxy-2-butanone 4-phosphate. This is the penultimate step in the biosynthesis of riboflavin. The chain is 6,7-dimethyl-8-ribityllumazine synthase from Caldicellulosiruptor bescii (strain ATCC BAA-1888 / DSM 6725 / KCTC 15123 / Z-1320) (Anaerocellum thermophilum).